The sequence spans 131 residues: Small ribosomal subunit protein uS8 (131 aa).

Belongs to the universal ribosomal protein uS8 family. In terms of assembly, part of the 30S ribosomal subunit. Contacts proteins S5 and S12.

Functionally, one of the primary rRNA binding proteins, it binds directly to 16S rRNA central domain where it helps coordinate assembly of the platform of the 30S subunit. This Wolbachia pipientis subsp. Culex pipiens (strain wPip) protein is Small ribosomal subunit protein uS8.